Here is a 241-residue protein sequence, read N- to C-terminus: DNA repair protein RecO (241 aa).

It belongs to the RecO family.

Its function is as follows. Involved in DNA repair and RecF pathway recombination. The chain is DNA repair protein RecO from Xanthomonas campestris pv. campestris (strain B100).